Here is a 256-residue protein sequence, read N- to C-terminus: Imidazole glycerol phosphate synthase subunit HisF (256 aa).

Residues aspartate 11 and aspartate 130 contribute to the active site.

The protein belongs to the HisA/HisF family. As to quaternary structure, heterodimer of HisH and HisF.

It localises to the cytoplasm. The catalysed reaction is 5-[(5-phospho-1-deoxy-D-ribulos-1-ylimino)methylamino]-1-(5-phospho-beta-D-ribosyl)imidazole-4-carboxamide + L-glutamine = D-erythro-1-(imidazol-4-yl)glycerol 3-phosphate + 5-amino-1-(5-phospho-beta-D-ribosyl)imidazole-4-carboxamide + L-glutamate + H(+). The protein operates within amino-acid biosynthesis; L-histidine biosynthesis; L-histidine from 5-phospho-alpha-D-ribose 1-diphosphate: step 5/9. Its function is as follows. IGPS catalyzes the conversion of PRFAR and glutamine to IGP, AICAR and glutamate. The HisF subunit catalyzes the cyclization activity that produces IGP and AICAR from PRFAR using the ammonia provided by the HisH subunit. In Prochlorococcus marinus (strain AS9601), this protein is Imidazole glycerol phosphate synthase subunit HisF.